Here is a 353-residue protein sequence, read N- to C-terminus: MALFSAQSPYINPIIPFTGPIQGGLQEGLQVTLQGTTKSFAQRFVVNFQNSFNGNDIAFHFNPRFEEGGYVVCNTKQNGQWGPEERKMQMPFQKGMPFELCFLVQRSEFKVMVNKKFFVQYQHRVPYHLVDTIAVSGCLKLSFITFQNSAAPVQHVFSTLQFSQPVQFPRTPKGRKQKTQNFRPAHQAPMAQTTIHMVHSTPGQMFSTPGIPPVVYPTPAYTIPFYTPIPNGLYPSKSIMISGNVLPDATRFHINLRCGGDIAFHLNPRFNENAVVRNTQINNSWGQEERSLLGRMPFSRGQSFSVWIICEGHCFKVAVNGQHMCEYYHRLKNLQDINTLEVAGDIQLTHVQT.

The region spanning 17–147 (FTGPIQGGLQ…CLKLSFITFQ (131 aa)) is the Galectin 1 domain. Residues Asn-47, His-60, Arg-64, Asn-74, and 81–87 (WGPEERK) contribute to the a beta-D-galactoside site. A disordered region spans residues 167–186 (QFPRTPKGRKQKTQNFRPAH). Residues 225-353 (FYTPIPNGLY…GDIQLTHVQT (129 aa)) enclose the Galectin 2 domain. A beta-D-galactoside contacts are provided by residues His-265, Arg-269, Thr-279, and 285 to 291 (WGQEERS).

As to quaternary structure, homodimer. As to expression, accentuated expression in liver and thymus of embryo, detected in embryonic heart, brain, lung, liver, and kidney. Highly expressed in adult thymus, small intestine, and liver, and to a lesser extent in lung, kidney, spleen, cardiac, and skeletal muscle. Barely detectable in brain and reticulocyte. Expressed in placenta, uterus and decidua during pregnancy. Expressed in CD4+ T-cells with higher levels in iTreg cells than other T-cell types and sustained high levels throughout iTreg cell differentiation (at protein level). Expressed in myeloid cells in lung. Constitutively expressed in microglia. Isoform 1 is expressed exclusively in the small intestine. Isoform 2 expression in decidua increases in pathological pregnancy from gestation day 7.5 to 13.5 and it is higher than in normal pregnancy. Isoform 3 expression in decidua is higher in normal pregnancy than in pathological pregnancy.

The protein resides in the cytoplasm. It localises to the nucleus. The protein localises to the secreted. Binds galactosides. Has high affinity for the Forssman pentasaccharide. Ligand for HAVCR2/TIM3. Binding to HAVCR2 induces T-helper type 1 lymphocyte (Th1) death. Also stimulates bactericidal activity in infected macrophages by causing macrophage activation and IL1B secretion which restricts intracellular bacterial growth. Ligand for P4HB; the interaction retains P4HB at the cell surface of Th2 T-helper cells, increasing disulfide reductase activity at the plasma membrane, altering the plasma membrane redox state and enhancing cell migration. Ligand for CD44; the interaction enhances binding of SMAD3 to the FOXP3 promoter, leading to up-regulation of FOXP3 expression and increased induced regulatory T (iTreg) cell stability and suppressive function. Promotes ability of mesenchymal stromal cells to suppress T-cell proliferation. Expands regulatory T-cells and induces cytotoxic T-cell apoptosis following virus infection. Activates ERK1/2 phosphorylation inducing cytokine (IL-6, IL-8, IL-12) and chemokine (CCL2) production in mast and dendritic cells. Inhibits degranulation and induces apoptosis of mast cells. Induces maturation and migration of dendritic cells. Inhibits natural killer (NK) cell function. Can transform NK cell phenotype from peripheral to decidual during pregnancy. Astrocyte derived galectin-9 enhances microglial TNF production. May play a role in thymocyte-epithelial interactions relevant to the biology of the thymus. May provide the molecular basis for urate flux across cell membranes, allowing urate that is formed during purine metabolism to efflux from cells and serving as an electrogenic transporter that plays an important role in renal and gastrointestinal urate excretion. Highly selective to the anion urate. Its function is as follows. Acts as an eosinophil chemoattractant. It also inhibits angiogenesis. Suppresses IFNG production by natural killer cells. In Mus musculus (Mouse), this protein is Galectin-9 (Lgals9).